Consider the following 185-residue polypeptide: Ribosome-recycling factor (185 aa).

The protein belongs to the RRF family.

Its subcellular location is the cytoplasm. Its function is as follows. Responsible for the release of ribosomes from messenger RNA at the termination of protein biosynthesis. May increase the efficiency of translation by recycling ribosomes from one round of translation to another. The polypeptide is Ribosome-recycling factor (Pseudomonas syringae pv. tomato (strain ATCC BAA-871 / DC3000)).